We begin with the raw amino-acid sequence, 154 residues long: Myoglobin (154 aa).

The 147-residue stretch at 2–148 (GLSEGEWQLV…FRKDIATKYK (147 aa)) folds into the Globin domain. Serine 4 is subject to Phosphoserine. Histidine 65 serves as a coordination point for nitrite. Residue histidine 65 participates in O2 binding. The residue at position 68 (threonine 68) is a Phosphothreonine. Histidine 94 is a binding site for heme b.

The protein belongs to the globin family. As to quaternary structure, monomeric.

The protein resides in the cytoplasm. It is found in the sarcoplasm. The catalysed reaction is Fe(III)-heme b-[protein] + nitric oxide + H2O = Fe(II)-heme b-[protein] + nitrite + 2 H(+). The enzyme catalyses H2O2 + AH2 = A + 2 H2O. Monomeric heme protein which primary function is to store oxygen and facilitate its diffusion within muscle tissues. Reversibly binds oxygen through a pentacoordinated heme iron and enables its timely and efficient release as needed during periods of heightened demand. Depending on the oxidative conditions of tissues and cells, and in addition to its ability to bind oxygen, it also has a nitrite reductase activity whereby it regulates the production of bioactive nitric oxide. Under stress conditions, like hypoxia and anoxia, it also protects cells against reactive oxygen species thanks to its pseudoperoxidase activity. In Phocoenoides dalli dalli (Dall's porpoise), this protein is Myoglobin (MB).